The following is a 185-amino-acid chain: FK506-binding protein 2 (185 aa).

Residues 1–20 form the signal peptide; that stretch reads MQGLLLSLSLLASAAVGVLA. The 89-residue stretch at 41 to 129 folds into the PPIase FKBP-type domain; sequence GDKINVHYKG…VFETELVGIE (89 aa). Positions 182-185 match the Prevents secretion from ER motif; that stretch reads HNEL.

The protein belongs to the FKBP-type PPIase family. FKBP2 subfamily.

The protein localises to the endoplasmic reticulum. The enzyme catalyses [protein]-peptidylproline (omega=180) = [protein]-peptidylproline (omega=0). Its activity is regulated as follows. Inhibited by both FK506 and rapamycin. In terms of biological role, PPIases accelerate the folding of proteins. It catalyzes the cis-trans isomerization of proline imidic peptide bonds in oligopeptides. The chain is FK506-binding protein 2 (FPR2) from Podospora anserina (Pleurage anserina).